Consider the following 209-residue polypeptide: ATP phosphoribosyltransferase (209 aa).

It belongs to the ATP phosphoribosyltransferase family. Short subfamily. Heteromultimer composed of HisG and HisZ subunits.

The protein localises to the cytoplasm. It carries out the reaction 1-(5-phospho-beta-D-ribosyl)-ATP + diphosphate = 5-phospho-alpha-D-ribose 1-diphosphate + ATP. It functions in the pathway amino-acid biosynthesis; L-histidine biosynthesis; L-histidine from 5-phospho-alpha-D-ribose 1-diphosphate: step 1/9. Functionally, catalyzes the condensation of ATP and 5-phosphoribose 1-diphosphate to form N'-(5'-phosphoribosyl)-ATP (PR-ATP). Has a crucial role in the pathway because the rate of histidine biosynthesis seems to be controlled primarily by regulation of HisG enzymatic activity. This is ATP phosphoribosyltransferase from Caldicellulosiruptor bescii (strain ATCC BAA-1888 / DSM 6725 / KCTC 15123 / Z-1320) (Anaerocellum thermophilum).